Reading from the N-terminus, the 416-residue chain is Gamma-glutamyl phosphate reductase (416 aa).

Belongs to the gamma-glutamyl phosphate reductase family.

The protein localises to the cytoplasm. It carries out the reaction L-glutamate 5-semialdehyde + phosphate + NADP(+) = L-glutamyl 5-phosphate + NADPH + H(+). The protein operates within amino-acid biosynthesis; L-proline biosynthesis; L-glutamate 5-semialdehyde from L-glutamate: step 2/2. Its function is as follows. Catalyzes the NADPH-dependent reduction of L-glutamate 5-phosphate into L-glutamate 5-semialdehyde and phosphate. The product spontaneously undergoes cyclization to form 1-pyrroline-5-carboxylate. This is Gamma-glutamyl phosphate reductase from Vibrio vulnificus (strain YJ016).